Here is a 275-residue protein sequence, read N- to C-terminus: Phosphonates import ATP-binding protein PhnC (275 aa).

The 245-residue stretch at 2–246 (LKIENLTKRY…ALTEIYGEEE (245 aa)) folds into the ABC transporter domain. An ATP-binding site is contributed by 35-42 (GPSGAGKS).

It belongs to the ABC transporter superfamily. Phosphonates importer (TC 3.A.1.9.1) family. As to quaternary structure, the complex is composed of two ATP-binding proteins (PhnC), two transmembrane proteins (PhnE) and a solute-binding protein (PhnD).

It localises to the cell inner membrane. It catalyses the reaction phosphonate(out) + ATP + H2O = phosphonate(in) + ADP + phosphate + H(+). Functionally, part of the ABC transporter complex PhnCDE involved in phosphonates import. Responsible for energy coupling to the transport system. The protein is Phosphonates import ATP-binding protein PhnC of Wolinella succinogenes (strain ATCC 29543 / DSM 1740 / CCUG 13145 / JCM 31913 / LMG 7466 / NCTC 11488 / FDC 602W) (Vibrio succinogenes).